A 2185-amino-acid chain; its full sequence is Genome polyprotein (2185 aa).

Residue Gly2 is the site of N-myristoyl glycine; by host attachment. Residues 2 to 1495 (GAQVSTQKTG…HVSRAFICLQ (1494 aa)) are Cytoplasmic-facing. An amphipathic alpha-helix region spans residues 566–582 (FYQGPPGEAVERAIARV). Active-site for protease 2A activity residues include His872 and Asp890. Zn(2+)-binding residues include Cys907 and Cys909. Cys961 functions as the For protease 2A activity in the catalytic mechanism. Cys967 and His969 together coordinate Zn(2+). A membrane-binding region spans residues 1101–1173 (NNNWLKKFTE…EQSAPSQSDQ (73 aa)). Positions 1101–1239 (NNNWLKKFTE…SPGAGKSVAT (139 aa)) are oligomerization. The RNA-binding stretch occupies residues 1122-1126 (AVKIQ). Residues 1205-1361 (EKKMSNYIQF…SMYSQNGKIN (157 aa)) form the SF3 helicase domain. Zn(2+) contacts are provided by Cys1369, Cys1381, and Cys1386. The C4-type; degenerate zinc finger occupies 1369-1386 (CDEECCPVNFKRCCPLVC). The segment at 1413–1420 (EYNHRHSV) is RNA-binding. The oligomerization stretch occupies residues 1424–1429 (LEALFQ). An intramembrane segment occupies 1496–1511 (ALTTFVSVAGIIYIIY). The Cytoplasmic segment spans residues 1512–2185 (KLFAGFQGAY…TLRRKWLDSF (674 aa)). Tyr1521 carries the O-(5'-phospho-RNA)-tyrosine modification. A Peptidase C3 domain is found at 1541 to 1719 (GPAFEFAVAM…FSAALLKHYF (179 aa)). Residues His1580, Glu1611, and Cys1687 each act as for protease 3C activity in the active site. A RdRp catalytic domain is found at 1950-2066 (GHLIAFDYSG…SYPWPIDASL (117 aa)). 2 residues coordinate Mg(2+): Asp1956 and Asp2052.

It belongs to the picornaviruses polyprotein family. As to quaternary structure, interacts with capsid protein VP1 and capsid protein VP3 to form heterotrimeric protomers. Interacts with capsid protein VP0, and capsid protein VP3 to form heterotrimeric protomers. Five protomers subsequently associate to form pentamers which serve as building blocks for the capsid. Interacts with capsid protein VP2, capsid protein VP3 and capsid protein VP4 following cleavage of capsid protein VP0. In terms of assembly, interacts with capsid protein VP1 and capsid protein VP3 in the mature capsid. As to quaternary structure, interacts with capsid protein VP0 and capsid protein VP1 to form heterotrimeric protomers. Five protomers subsequently associate to form pentamers which serve as building blocks for the capsid. Interacts with capsid protein VP4 in the mature capsid. Interacts with protein 2C; this interaction may be important for virion morphogenesis. Interacts with capsid protein VP1 and capsid protein VP3. In terms of assembly, homodimer. As to quaternary structure, homohexamer; forms a hexameric ring structure with 6-fold symmetry characteristic of AAA+ ATPases. Interacts (via N-terminus) with host RTN3 (via reticulon domain); this interaction is important for viral replication. Interacts with capsid protein VP3; this interaction may be important for virion morphogenesis. Interacts with protein 3CD. In terms of assembly, homodimer. Interacts with host GBF1. Interacts (via GOLD domain) with host ACBD3 (via GOLD domain); this interaction allows the formation of a viral protein 3A/ACBD3 heterotetramer with a 2:2 stoichiometry, which will stimulate the recruitment of host PI4KB in order to synthesize PI4P at the viral RNA replication sites. As to quaternary structure, interacts with RNA-directed RNA polymerase. Interacts with protein 3AB and with RNA-directed RNA polymerase. In terms of assembly, interacts with Viral protein genome-linked and with protein 3CD. Requires Mg(2+) as cofactor. In terms of processing, specific enzymatic cleavages in vivo by the viral proteases yield processing intermediates and the mature proteins. Myristoylation is required for the formation of pentamers during virus assembly. Further assembly of 12 pentamers and a molecule of genomic RNA generates the provirion. Post-translationally, during virion maturation, immature virions are rendered infectious following cleavage of VP0 into VP4 and VP2. This maturation seems to be an autocatalytic event triggered by the presence of RNA in the capsid and it is followed by a conformational change infectious virion. In terms of processing, myristoylation is required during RNA encapsidation and formation of the mature virus particle. VPg is uridylylated by the polymerase into VPg-pUpU. This acts as a nucleotide-peptide primer for the genomic RNA replication.

The protein localises to the virion. It is found in the host cytoplasm. The protein resides in the host cytoplasmic vesicle membrane. It localises to the host nucleus. The catalysed reaction is a ribonucleoside 5'-triphosphate + H2O = a ribonucleoside 5'-diphosphate + phosphate + H(+). The enzyme catalyses Selective cleavage of Tyr-|-Gly bond in the picornavirus polyprotein.. It carries out the reaction RNA(n) + a ribonucleoside 5'-triphosphate = RNA(n+1) + diphosphate. It catalyses the reaction Selective cleavage of Gln-|-Gly bond in the poliovirus polyprotein. In other picornavirus reactions Glu may be substituted for Gln, and Ser or Thr for Gly.. Its activity is regulated as follows. Replication or transcription is subject to high level of random mutations by the nucleotide analog ribavirin. Functionally, forms an icosahedral capsid of pseudo T=3 symmetry with capsid proteins VP2 and VP3. The capsid is 300 Angstroms in diameter, composed of 60 copies of each capsid protein and enclosing the viral positive strand RNA genome. Capsid protein VP1 mainly forms the vertices of the capsid. Capsid protein VP1 interacts with host cell receptor to provide virion attachment to target host cells. This attachment induces virion internalization. Tyrosine kinases are probably involved in the entry process. After binding to its receptor, the capsid undergoes conformational changes. Capsid protein VP1 N-terminus (that contains an amphipathic alpha-helix) and capsid protein VP4 are externalized. Together, they shape a pore in the host membrane through which viral genome is translocated to host cell cytoplasm. In terms of biological role, forms an icosahedral capsid of pseudo T=3 symmetry with capsid proteins VP2 and VP3. The capsid is 300 Angstroms in diameter, composed of 60 copies of each capsid protein and enclosing the viral positive strand RNA genome. Lies on the inner surface of the capsid shell. After binding to the host receptor, the capsid undergoes conformational changes. Capsid protein VP4 is released, Capsid protein VP1 N-terminus is externalized, and together, they shape a pore in the host membrane through which the viral genome is translocated into the host cell cytoplasm. Its function is as follows. Component of immature procapsids, which is cleaved into capsid proteins VP4 and VP2 after maturation. Allows the capsid to remain inactive before the maturation step. Functionally, cysteine protease that cleaves viral polyprotein and specific host proteins. It is responsible for the autocatalytic cleavage between the P1 and P2 regions, which is the first cleavage occurring in the polyprotein. Also cleaves the host translation initiation factor EIF4G1, in order to shut down the capped cellular mRNA translation. Inhibits the host nucleus-cytoplasm protein and RNA trafficking by cleaving host members of the nuclear pores. Counteracts stress granule formation probably by antagonizing its assembly or promoting its dissassembly. Cleaves and inhibits host IFIH1/MDA5, thereby inhibiting the type-I IFN production and the establishment of the antiviral state. Cleaves and inhibits host MAVS, thereby inhibiting the type-I IFN production and the establishment of the antiviral state. In terms of biological role, plays an essential role in the virus replication cycle by acting as a viroporin. Creates a pore in the host endoplasmic reticulum and as a consequence releases Ca2+ in the cytoplasm of infected cell. In turn, high levels of cytoplasmic calcium may trigger membrane trafficking and transport of viral ER-associated proteins to viroplasms, sites of viral genome replication. Induces and associates with structural rearrangements of intracellular membranes. Displays RNA-binding, nucleotide binding and NTPase activities. May play a role in virion morphogenesis and viral RNA encapsidation by interacting with the capsid protein VP3. Its function is as follows. Localizes the viral replication complex to the surface of membranous vesicles. Together with protein 3CD binds the Cis-Active RNA Element (CRE) which is involved in RNA synthesis initiation. Acts as a cofactor to stimulate the activity of 3D polymerase, maybe through a nucleid acid chaperone activity. Functionally, localizes the viral replication complex to the surface of membranous vesicles. It inhibits host cell endoplasmic reticulum-to-Golgi apparatus transport and causes the disassembly of the Golgi complex, possibly through GBF1 interaction. This would result in depletion of MHC, trail receptors and IFN receptors at the host cell surface. Plays an essential role in viral RNA replication by recruiting ACBD3 and PI4KB at the viral replication sites, thereby allowing the formation of the rearranged membranous structures where viral replication takes place. In terms of biological role, acts as a primer for viral RNA replication and remains covalently bound to viral genomic RNA. VPg is uridylylated prior to priming replication into VPg-pUpU. The oriI viral genomic sequence may act as a template for this. The VPg-pUpU is then used as primer on the genomic RNA poly(A) by the RNA-dependent RNA polymerase to replicate the viral genome. During genome replication, the VPg-RNA linkage is removed by the host TDP2, thereby accelerating replication. During the late stage of the replication cycle, host TDP2 is excluded from sites of viral RNA synthesis and encapsidation, allowing for the generation of progeny virions. Involved in the viral replication complex and viral polypeptide maturation. It exhibits protease activity with a specificity and catalytic efficiency that is different from protease 3C. Protein 3CD lacks polymerase activity. Protein 3CD binds to the 5'UTR of the viral genome. Its function is as follows. Replicates the viral genomic RNA on the surface of intracellular membranes. May form linear arrays of subunits that propagate along a strong head-to-tail interaction called interface-I. Covalently attaches UMP to a tyrosine of VPg, which is used to prime RNA synthesis. The positive stranded RNA genome is first replicated at virus induced membranous vesicles, creating a dsRNA genomic replication form. This dsRNA is then used as template to synthesize positive stranded RNA genomes. ss(+)RNA genomes are either translated, replicated or encapsidated. Functionally, major viral protease that mediates proteolytic processing of the polyprotein. Cleaves host EIF5B, contributing to host translation shutoff. Also cleaves host PABPC1, contributing to host translation shutoff. Cleaves host NLRP1, triggers host N-glycine-mediated degradation of the autoinhibitory NLRP1 N-terminal fragment. This is Genome polyprotein from Homo sapiens (Human).